Here is a 215-residue protein sequence, read N- to C-terminus: Phosphatidylserine decarboxylase proenzyme (215 aa).

The active-site Schiff-base intermediate with substrate; via pyruvic acid is the serine 186. At serine 186 the chain carries Pyruvic acid (Ser); by autocatalysis.

It belongs to the phosphatidylserine decarboxylase family. PSD-A subfamily. Heterodimer of a large membrane-associated beta subunit and a small pyruvoyl-containing alpha subunit. Pyruvate serves as cofactor. In terms of processing, is synthesized initially as an inactive proenzyme. Formation of the active enzyme involves a self-maturation process in which the active site pyruvoyl group is generated from an internal serine residue via an autocatalytic post-translational modification. Two non-identical subunits are generated from the proenzyme in this reaction, and the pyruvate is formed at the N-terminus of the alpha chain, which is derived from the carboxyl end of the proenzyme. The post-translation cleavage follows an unusual pathway, termed non-hydrolytic serinolysis, in which the side chain hydroxyl group of the serine supplies its oxygen atom to form the C-terminus of the beta chain, while the remainder of the serine residue undergoes an oxidative deamination to produce ammonia and the pyruvoyl prosthetic group on the alpha chain.

It is found in the cell membrane. It catalyses the reaction a 1,2-diacyl-sn-glycero-3-phospho-L-serine + H(+) = a 1,2-diacyl-sn-glycero-3-phosphoethanolamine + CO2. The protein operates within phospholipid metabolism; phosphatidylethanolamine biosynthesis; phosphatidylethanolamine from CDP-diacylglycerol: step 2/2. Its function is as follows. Catalyzes the formation of phosphatidylethanolamine (PtdEtn) from phosphatidylserine (PtdSer). This is Phosphatidylserine decarboxylase proenzyme from Pelagibacter ubique (strain HTCC1062).